Here is a 245-residue protein sequence, read N- to C-terminus: 2,3-bisphosphoglycerate-dependent phosphoglycerate mutase 1 (245 aa).

Substrate contacts are provided by residues 8-15 (RHGQSLWN), 21-22 (TG), R60, 87-90 (ERHY), K98, 114-115 (RR), and 183-184 (GN). H9 (tele-phosphohistidine intermediate) is an active-site residue. E87 acts as the Proton donor/acceptor in catalysis.

It belongs to the phosphoglycerate mutase family. BPG-dependent PGAM subfamily.

It catalyses the reaction (2R)-2-phosphoglycerate = (2R)-3-phosphoglycerate. The protein operates within carbohydrate degradation; glycolysis; pyruvate from D-glyceraldehyde 3-phosphate: step 3/5. Its function is as follows. Catalyzes the interconversion of 2-phosphoglycerate and 3-phosphoglycerate. The polypeptide is 2,3-bisphosphoglycerate-dependent phosphoglycerate mutase 1 (Bacillus cereus (strain ATCC 10987 / NRS 248)).